The chain runs to 51 residues: Protein HokD (51 aa).

Residues 5–25 traverse the membrane as a helical segment; that stretch reads KAMLIALIVICLTVIVTALVT.

This sequence belongs to the Hok/Gef family.

The protein localises to the cell inner membrane. In terms of biological role, toxic component of a type I toxin-antitoxin (TA) system. When overexpressed kills cells within minutes; causes collapse of the transmembrane potential and arrest of respiration. Its toxic effect is probably neutralized by an antisense antitoxin Sok RNA. This is Protein HokD (hokD) from Escherichia coli O157:H7.